A 397-amino-acid polypeptide reads, in one-letter code: Phosphoglycerate kinase (397 aa).

Substrate is bound by residues 21–23, R37, 60–63, R119, and R152; these read DFN and HLGR. Residues K202, G294, E325, and 351–354 each bind ATP; that span reads GGDS.

The protein belongs to the phosphoglycerate kinase family. As to quaternary structure, monomer.

The protein resides in the cytoplasm. The catalysed reaction is (2R)-3-phosphoglycerate + ATP = (2R)-3-phospho-glyceroyl phosphate + ADP. The protein operates within carbohydrate degradation; glycolysis; pyruvate from D-glyceraldehyde 3-phosphate: step 2/5. This chain is Phosphoglycerate kinase, found in Pseudothermotoga lettingae (strain ATCC BAA-301 / DSM 14385 / NBRC 107922 / TMO) (Thermotoga lettingae).